We begin with the raw amino-acid sequence, 443 residues long: Trigger factor (443 aa).

Residues 161–246 (GDKVVIDFQG…IKKIMEGKLP (86 aa)) form the PPIase FKBP-type domain.

This sequence belongs to the FKBP-type PPIase family. Tig subfamily.

It is found in the cytoplasm. It catalyses the reaction [protein]-peptidylproline (omega=180) = [protein]-peptidylproline (omega=0). Involved in protein export. Acts as a chaperone by maintaining the newly synthesized protein in an open conformation. Functions as a peptidyl-prolyl cis-trans isomerase. This Legionella pneumophila (strain Lens) protein is Trigger factor.